A 581-amino-acid polypeptide reads, in one-letter code: MKASQFFVSTLKEAPADAEITSHKLMMRAGMIKRLGAGIYSYMPMGLRVIRKVEAIIREEMNRAGAVELLMPVVQPAELWQETGRFEKMGPELMRVKDRHDRDFIIQPTSEEVVTDIARQELRSYRQLPKNFYHIQTKFRDERRPRFGVMRGREFTMKDAYSFDRDEAAAGRSYDAMYAAYGRIFDRFGLSYRAVAADTGAIGGDRSHEFQVIAETGEDAIVYCPTSDYAANIELAECLPLAAQRPVPIQPLTKTPTPGKATCADVAALLNLPLTQTVKSLVLATDDRNDGGDIVKTTVWLLLVRGDHELNEVKAGKLPGLKAGFRFATVGEIDAHFGCKPGYLGPIGLKQPVRVIADRTVAHMGDFVCGANDADFHYTGVNWGRDLPEPDLVADIRNAVVGDPSPDGKGVLAIQRGIEVGHVFYLGTKYSAAMNATYLDETGKPRLMEMGCYGIGVTRILGAAIEQRHDARGIVWPTAIAPFEVVICPIGYDRSAEVRQAADTLHDELQALGMDLMLDDRGERPGAMFADWELIGIPQRVVISDRGLKEGQVELQGRQEAEAGKLAVAEVVAQLRARLRD.

Belongs to the class-II aminoacyl-tRNA synthetase family. ProS type 1 subfamily. In terms of assembly, homodimer.

Its subcellular location is the cytoplasm. It catalyses the reaction tRNA(Pro) + L-proline + ATP = L-prolyl-tRNA(Pro) + AMP + diphosphate. Its function is as follows. Catalyzes the attachment of proline to tRNA(Pro) in a two-step reaction: proline is first activated by ATP to form Pro-AMP and then transferred to the acceptor end of tRNA(Pro). As ProRS can inadvertently accommodate and process non-cognate amino acids such as alanine and cysteine, to avoid such errors it has two additional distinct editing activities against alanine. One activity is designated as 'pretransfer' editing and involves the tRNA(Pro)-independent hydrolysis of activated Ala-AMP. The other activity is designated 'posttransfer' editing and involves deacylation of mischarged Ala-tRNA(Pro). The misacylated Cys-tRNA(Pro) is not edited by ProRS. This chain is Proline--tRNA ligase, found in Methylibium petroleiphilum (strain ATCC BAA-1232 / LMG 22953 / PM1).